A 200-amino-acid polypeptide reads, in one-letter code: Probable molybdenum cofactor guanylyltransferase (200 aa).

GTP-binding positions include 8–10 (LAG), Lys20, Asp66, and Asp97. Residue Asp97 participates in Mg(2+) binding.

The protein belongs to the MobA family. The cofactor is Mg(2+).

It is found in the cytoplasm. The enzyme catalyses Mo-molybdopterin + GTP + H(+) = Mo-molybdopterin guanine dinucleotide + diphosphate. Functionally, transfers a GMP moiety from GTP to Mo-molybdopterin (Mo-MPT) cofactor (Moco or molybdenum cofactor) to form Mo-molybdopterin guanine dinucleotide (Mo-MGD) cofactor. The protein is Probable molybdenum cofactor guanylyltransferase of Bacillus velezensis (strain DSM 23117 / BGSC 10A6 / LMG 26770 / FZB42) (Bacillus amyloliquefaciens subsp. plantarum).